A 137-amino-acid chain; its full sequence is Small ribosomal subunit protein uS11 (137 aa).

The interval 116–137 is disordered; it reads EDVTPIPHDGTRPKGGRRGRRV.

This sequence belongs to the universal ribosomal protein uS11 family. In terms of assembly, part of the 30S ribosomal subunit.

Located on the platform of the 30S subunit. The polypeptide is Small ribosomal subunit protein uS11 (Pyrococcus abyssi (strain GE5 / Orsay)).